A 390-amino-acid polypeptide reads, in one-letter code: Lipoyl synthase, mitochondrial (390 aa).

Residues 1 to 18 (MALYRAPKLQRSLLNRCL) constitute a mitochondrion transit peptide. 7 residues coordinate [4Fe-4S] cluster: C99, C104, C110, C137, C141, C144, and S351. The 221-residue stretch at 120–340 (AEGRSAATAT…KQVAEDLGFL (221 aa)) folds into the Radical SAM core domain.

Belongs to the radical SAM superfamily. Lipoyl synthase family. It depends on [4Fe-4S] cluster as a cofactor.

Its subcellular location is the mitochondrion. It catalyses the reaction [[Fe-S] cluster scaffold protein carrying a second [4Fe-4S](2+) cluster] + N(6)-octanoyl-L-lysyl-[protein] + 2 oxidized [2Fe-2S]-[ferredoxin] + 2 S-adenosyl-L-methionine + 4 H(+) = [[Fe-S] cluster scaffold protein] + N(6)-[(R)-dihydrolipoyl]-L-lysyl-[protein] + 4 Fe(3+) + 2 hydrogen sulfide + 2 5'-deoxyadenosine + 2 L-methionine + 2 reduced [2Fe-2S]-[ferredoxin]. Its pathway is protein modification; protein lipoylation via endogenous pathway; protein N(6)-(lipoyl)lysine from octanoyl-[acyl-carrier-protein]: step 2/2. Functionally, catalyzes the radical-mediated insertion of two sulfur atoms into the C-6 and C-8 positions of the octanoyl moiety bound to the lipoyl domains of lipoate-dependent enzymes, thereby converting the octanoylated domains into lipoylated derivatives. The sequence is that of Lipoyl synthase, mitochondrial from Coprinopsis cinerea (strain Okayama-7 / 130 / ATCC MYA-4618 / FGSC 9003) (Inky cap fungus).